Reading from the N-terminus, the 326-residue chain is Ras association domain-containing protein 2 (326 aa).

The Ras-associating domain occupies 176-264 (YNHKTSVFTP…SKVFLMEKDQ (89 aa)). In terms of domain architecture, SARAH spans 272–319 (VAQYIKFEMPVLKSFIQKLQEEEDREVEKLMRKYTVLRLMIRQRLEEI).

As to quaternary structure, interacts directly with activated KRAS in a GTP-dependent manner. Interacts (via SARAH domain) with STK3/MST2 and STK4/MST1. Post-translationally, phosphorylated by STK3/MST2 and STK4/MST1.

It is found in the nucleus. The protein resides in the cytoplasm. The protein localises to the chromosome. It localises to the centromere. Its subcellular location is the kinetochore. Functionally, potential tumor suppressor. Acts as a KRAS-specific effector protein. May promote apoptosis and cell cycle arrest. Stabilizes STK3/MST2 by protecting it from proteasomal degradation. The chain is Ras association domain-containing protein 2 (Rassf2) from Mus musculus (Mouse).